Here is a 351-residue protein sequence, read N- to C-terminus: Transmembrane protein 255A (351 aa).

4 consecutive transmembrane segments (helical) span residues 30–50 (IYVTVTLLIVSMLILTVGLAA), 57–77 (VTVGGYYPGVILGFGSFLGII), 89–109 (LVASIVFISFGVIAAFCCAIV), and 226–246 (TILNIVGLFLGIITAAVLGGF). A disordered region spans residues 302-331 (FPSSPPSGLSDEQEPQSPSPSPSYMWSSSA).

It belongs to the TMEM255 family.

The protein localises to the membrane. This Mus musculus (Mouse) protein is Transmembrane protein 255A (Tmem255a).